A 408-amino-acid chain; its full sequence is Histidine--tRNA ligase (408 aa).

The protein belongs to the class-II aminoacyl-tRNA synthetase family. Homodimer.

The protein resides in the cytoplasm. The enzyme catalyses tRNA(His) + L-histidine + ATP = L-histidyl-tRNA(His) + AMP + diphosphate + H(+). The polypeptide is Histidine--tRNA ligase (Campylobacter jejuni subsp. doylei (strain ATCC BAA-1458 / RM4099 / 269.97)).